Consider the following 727-residue polypeptide: Phenylalanine ammonia-lyase str11 (727 aa).

Tyrosine 105 (proton donor/acceptor) is an active-site residue. The segment at residues 210 to 212 is a cross-link (5-imidazolinone (Ala-Gly)); the sequence is ASG. Serine 211 bears the 2,3-didehydroalanine (Ser) mark. Positions 271, 361, 367, 397, 468, 496, and 499 each coordinate (E)-cinnamate.

The protein belongs to the PAL/histidase family. In terms of processing, contains an active site 4-methylidene-imidazol-5-one (MIO), which is formed autocatalytically by cyclization and dehydration of residues Ala-Ser-Gly.

The catalysed reaction is L-phenylalanine = (E)-cinnamate + NH4(+). Its pathway is mycotoxin biosynthesis. Its function is as follows. Phenylalanine ammonia-lyase; part of the gene cluster that mediates the biosynthesis of strobilurin A, an antifungal polyketide that contains a key beta-methoxyacrylate toxophore that targets the complex III of the mitochondrial electron transport chain. Strobilurin biosynthesis begins with construction of benzoyl CoA by step-wise elimination of ammonia from phenylalanine by the phenylalanine ammonia-lyase str11, oxygenation by str8 and retro-Claisen reaction to form benzoic acid, which is activated to its CoA thiolester benzoyl CoA by the dedicated CoA ligase str10. Benzoyl CoA forms the starter unit for the highly reducing polyketide synthase stpks1 that produces the polyketide prestrobilutin A. The FAD-dependent oxygenase str9 then catalyzes the key oxidative rearrangement responsible for the creation of the beta-methoxyacrylate toxophore. Str9 performs epoxidation of the 2,3 olefin of prestrobilutin A, followed by Meinwald rearrangement to furnish the aldehyde intermediate. Rapid enolization of the aldehyde intermediate would give the beta-methoxyacrylate skeleton and methylations catalyzed by str2 and str3 complete the synthesis and lead to the production of strobilurin A. The short-chain dehydrogenase stl2 and the dehydrogenase str4 play a role in the shunt pathway leading to the production of bolineol. The cluster encodes no obvious halogenase gene that could be involved in production of strobilurin B, nor any obvious dimethylallyl-transferase that could be involved in the production of strobilurin G. It is possible that unknown proteins encoded in, or near, the cluster (such as str1 or stl1) may form new classes of halogenases or dimethylally-transferases, or that the responsible genes are located elsewhere on the genome. Similarly, proteins encoded by str5/str6 hydrolases appear to have no chemical role in the biosynthesis of strobilurin A. Finally, no obvious self-resistance gene is found within the cluster. The polypeptide is Phenylalanine ammonia-lyase str11 (Strobilurus tenacellus).